Here is a 198-residue protein sequence, read N- to C-terminus: MDQQQNFQPLAESFYQVPTLELAKNLLGCILVKQTEEGTSSGVIVETEAYLGNTDRAAHGYGNRRTKRTEILYSKPGYAYVHLIHNHRLINVVSSMEGDPESVLIRAVEPFSGIDEMLMRRPVKKFQNLTSGPGKLTQAMGIYMEDYGHFMLAPPLFISEGKSPASVKTGSRIGIDNTGEAKDYPYRFWVDGNPFVSR.

Belongs to the DNA glycosylase MPG family.

The protein is Putative 3-methyladenine DNA glycosylase of Oceanobacillus iheyensis (strain DSM 14371 / CIP 107618 / JCM 11309 / KCTC 3954 / HTE831).